Here is a 461-residue protein sequence, read N- to C-terminus: Homogentisate 1,2-dioxygenase (461 aa).

His-341, Glu-347, and His-377 together coordinate Fe cation.

It belongs to the homogentisate dioxygenase family. Fe cation serves as cofactor.

The enzyme catalyses homogentisate + O2 = 4-maleylacetoacetate + H(+). It functions in the pathway amino-acid degradation; L-phenylalanine degradation; acetoacetate and fumarate from L-phenylalanine: step 4/6. The sequence is that of Homogentisate 1,2-dioxygenase (HGO) from Arabidopsis thaliana (Mouse-ear cress).